The chain runs to 703 residues: MAKREYPLERTRNIGIMAHIDAGKTTTTERILYYTGKIHKIGETHDGASQMDFMEQEKERGITIQSAATTAVWHGFFDQFAKTPYRVNIIDTPGHVDFTIEVERALRVLDGAVAVLDGAAGVEPQTETVWRQATTYDVPRIVFVNKMDKLGADFAMSVESMHERLQVNAEAIQWPIGAEDEFEAVIDLITQEAYYPVDDLGEKWEPREIPAELKELAEEKRNTLIEAVADVDDDLMEKYLEGEDISVEELKAAIRRATLALQFYPVLAGSAYKDKGVQMMLDAVVDYLPGPLDVKPYVANDPKTGEEIDLIADDSKSFAALAFKIMTDPFVGRLTFMRVYTGTLQSGSYVQNTSSDTRERVGRLLQMHATSRTEIDEVFSGDIAAAIGLKNTTTGDSLTAVDHQLILESMEFPEPVIELAIEPKTKADQDKLSNAIQKLAEEDPSFRATTNPETGDTLIAGMGELQLDIMVDRMRREFNVEATVGAPQVAYREAFTQTVQARGYFKRQSGGKGQYGDVYIEFSPNEEGAGFEFEDAIVGGVVPREYIPSVEAGLKDALNAGPLAGFPLVDLKAKLYDGSYHDVDSSEAAFKIAASLALKEAAKTAGAVILEPIMAVDIVAPEDNLGDVMGHVSARRGMIEGQESRGPVLAVKAKVPLSEMFGYATTLRSATQGRGTFQMVFDHYEAVPKNIQEEIIKNSGKEA.

A tr-type G domain is found at 9-292 (ERTRNIGIMA…AVVDYLPGPL (284 aa)). Residues 18-25 (AHIDAGKT), 91-95 (DTPGH), and 145-148 (NKMD) each bind GTP.

Belongs to the TRAFAC class translation factor GTPase superfamily. Classic translation factor GTPase family. EF-G/EF-2 subfamily.

The protein localises to the cytoplasm. In terms of biological role, catalyzes the GTP-dependent ribosomal translocation step during translation elongation. During this step, the ribosome changes from the pre-translocational (PRE) to the post-translocational (POST) state as the newly formed A-site-bound peptidyl-tRNA and P-site-bound deacylated tRNA move to the P and E sites, respectively. Catalyzes the coordinated movement of the two tRNA molecules, the mRNA and conformational changes in the ribosome. The sequence is that of Elongation factor G from Leuconostoc citreum (strain KM20).